Reading from the N-terminus, the 123-residue chain is MPTIEQLVRKGRQAKPKKSKTLALKGSPLRRGVCTRVYTTTPKKPNSALRKVARVRLSSGVEVTAYIPGEGHNLQEHSIVLVRGGRVKDLPGVRYHIVRGALDTQGVKDRKQGRSLYGAKKAK.

The tract at residues 1–21 is disordered; that stretch reads MPTIEQLVRKGRQAKPKKSKT. The span at 9 to 20 shows a compositional bias: basic residues; the sequence is RKGRQAKPKKSK. Asp89 carries the 3-methylthioaspartic acid modification.

This sequence belongs to the universal ribosomal protein uS12 family. In terms of assembly, part of the 30S ribosomal subunit. Contacts proteins S8 and S17. May interact with IF1 in the 30S initiation complex.

Its function is as follows. With S4 and S5 plays an important role in translational accuracy. Interacts with and stabilizes bases of the 16S rRNA that are involved in tRNA selection in the A site and with the mRNA backbone. Located at the interface of the 30S and 50S subunits, it traverses the body of the 30S subunit contacting proteins on the other side and probably holding the rRNA structure together. The combined cluster of proteins S8, S12 and S17 appears to hold together the shoulder and platform of the 30S subunit. The chain is Small ribosomal subunit protein uS12 from Bifidobacterium adolescentis (strain ATCC 15703 / DSM 20083 / NCTC 11814 / E194a).